The primary structure comprises 69 residues: Large ribosomal subunit protein uL29 (69 aa).

Belongs to the universal ribosomal protein uL29 family.

The protein is Large ribosomal subunit protein uL29 of Natronomonas pharaonis (strain ATCC 35678 / DSM 2160 / CIP 103997 / JCM 8858 / NBRC 14720 / NCIMB 2260 / Gabara) (Halobacterium pharaonis).